The following is a 213-amino-acid chain: Octanoyltransferase (213 aa).

The BPL/LPL catalytic domain maps to 32–207 (ENSHDEIWLV…NILALLNNPP (176 aa)). Residues 71–78 (RGGQVTYH), 138–140 (SLG), and 151–153 (GLA) each bind substrate. Cys-169 serves as the catalytic Acyl-thioester intermediate.

Belongs to the LipB family.

It is found in the cytoplasm. It catalyses the reaction octanoyl-[ACP] + L-lysyl-[protein] = N(6)-octanoyl-L-lysyl-[protein] + holo-[ACP] + H(+). It participates in protein modification; protein lipoylation via endogenous pathway; protein N(6)-(lipoyl)lysine from octanoyl-[acyl-carrier-protein]: step 1/2. In terms of biological role, catalyzes the transfer of endogenously produced octanoic acid from octanoyl-acyl-carrier-protein onto the lipoyl domains of lipoate-dependent enzymes. Lipoyl-ACP can also act as a substrate although octanoyl-ACP is likely to be the physiological substrate. This Salmonella typhi protein is Octanoyltransferase.